Consider the following 279-residue polypeptide: Tryptophan 2,3-dioxygenase (279 aa).

Substrate is bound by residues phenylalanine 48–histidine 52, tyrosine 110, and arginine 114. Histidine 237 lines the heme pocket. Substrate is bound at residue threonine 251.

It belongs to the tryptophan 2,3-dioxygenase family. As to quaternary structure, homotetramer. Requires heme as cofactor.

The enzyme catalyses L-tryptophan + O2 = N-formyl-L-kynurenine. Its pathway is amino-acid degradation; L-tryptophan degradation via kynurenine pathway; L-kynurenine from L-tryptophan: step 1/2. Its function is as follows. Heme-dependent dioxygenase that catalyzes the oxidative cleavage of the L-tryptophan (L-Trp) pyrrole ring and converts L-tryptophan to N-formyl-L-kynurenine. Catalyzes the oxidative cleavage of the indole moiety. The chain is Tryptophan 2,3-dioxygenase from Bacillus cereus (strain ATCC 10987 / NRS 248).